The sequence spans 393 residues: uncharacterized protein (393 aa).

The next 8 helical transmembrane spans lie at 15–35 (IVAFSFFLVFLIVISVIVTIF), 56–76 (WGWIFVVILGFLVSVLWNVII), 86–106 (FYASWWEWLLFGFVVQFFQIV), 131–151 (AVLIVTSTGAFWNLSQALITW), 176–196 (LSLTGMIFDVVVAILFIVIAF), 253–273 (LLANMVVAIVSYFSLFGVFMI), 289–309 (LIDLFNITNIAVTASNFIPVA), and 349–369 (VYLPAIFTGICFVVWIVQVIW).

It localises to the cell membrane. This is an uncharacterized protein from Mycoplasma genitalium (strain ATCC 33530 / DSM 19775 / NCTC 10195 / G37) (Mycoplasmoides genitalium).